Consider the following 315-residue polypeptide: G-box-binding factor 1 (315 aa).

2 disordered regions span residues 1-56 and 93-268; these read MGTS…GSPS and MPMP…RDEL. The span at 46–56 shows a compositional bias: pro residues; the sequence is PFFPSPVGSPS. Composition is skewed to polar residues over residues 133-164 and 178-187; these read GSGN…QEQG and ASSQSTTGEI. Positions 222–285 constitute a bZIP domain; the sequence is ELKRQKRKQS…DKLKSENNSI (64 aa). The basic motif stretch occupies residues 224 to 243; the sequence is KRQKRKQSNRESARRSRLRK. Residues 249–262 are compositionally biased toward polar residues; that stretch reads QLQQRVESLSNENQ. Residues 250–285 form a leucine-zipper region; it reads LQQRVESLSNENQSLRDELQRLSSECDKLKSENNSI.

It belongs to the bZIP family. In terms of assembly, monomer and heterodimers with BZIP16 and BZIP68. Interacts with GIP1. Phosphorylated by CK2. As to expression, found in both light and dark grown leaves.

It is found in the nucleus. Binds to the G-box motif (5'-CCACGTGG-3') of the rbcS-1A gene promoter. G-box and G-box-like motifs are cis-acting elements defined in promoters of certain plant genes which are regulated by such diverse stimuli as light-induction or hormone control. Binds to the G-box motif 5'-CACGTG-3' of LHCB2.4 (At3g27690) promoter. May act as transcriptional activator in light-regulated expression of LHCB2.4. Probably binds DNA as monomer. DNA-binding activity is redox-dependent. The sequence is that of G-box-binding factor 1 (GBF1) from Arabidopsis thaliana (Mouse-ear cress).